Here is a 53-residue protein sequence, read N- to C-terminus: UPF0181 protein VC_A0569 (53 aa).

Belongs to the UPF0181 family.

The chain is UPF0181 protein VC_A0569 from Vibrio cholerae serotype O1 (strain ATCC 39315 / El Tor Inaba N16961).